We begin with the raw amino-acid sequence, 72 residues long: MAKDDVIEVDGKVIEALPNATFRVELDNKHVILCHIAGRMRMHYIKILPGDRVKIELTPYSLDKGRITFRYK.

Positions 1-72 (MAKDDVIEVD…DKGRITFRYK (72 aa)) constitute an S1-like domain.

It belongs to the IF-1 family. Component of the 30S ribosomal translation pre-initiation complex which assembles on the 30S ribosome in the order IF-2 and IF-3, IF-1 and N-formylmethionyl-tRNA(fMet); mRNA recruitment can occur at any time during PIC assembly.

It is found in the cytoplasm. Its function is as follows. One of the essential components for the initiation of protein synthesis. Stabilizes the binding of IF-2 and IF-3 on the 30S subunit to which N-formylmethionyl-tRNA(fMet) subsequently binds. Helps modulate mRNA selection, yielding the 30S pre-initiation complex (PIC). Upon addition of the 50S ribosomal subunit IF-1, IF-2 and IF-3 are released leaving the mature 70S translation initiation complex. This chain is Translation initiation factor IF-1, found in Wolinella succinogenes (strain ATCC 29543 / DSM 1740 / CCUG 13145 / JCM 31913 / LMG 7466 / NCTC 11488 / FDC 602W) (Vibrio succinogenes).